Reading from the N-terminus, the 198-residue chain is Recombination protein RecR (198 aa).

The C4-type zinc finger occupies 57 to 72; the sequence is CRQCRTLSEEELCPQC. The Toprim domain maps to 80 to 174; that stretch reads SLLCVVEGPL…TLSRIAHGVP (95 aa).

Belongs to the RecR family.

Its function is as follows. May play a role in DNA repair. It seems to be involved in an RecBC-independent recombinational process of DNA repair. It may act with RecF and RecO. The protein is Recombination protein RecR of Pseudomonas aeruginosa (strain LESB58).